The sequence spans 336 residues: Anthranilate phosphoribosyltransferase (336 aa).

5-phospho-alpha-D-ribose 1-diphosphate contacts are provided by residues glycine 79, 82–83 (GD), threonine 87, 89–92 (NIST), 107–115 (KHGNRSVSS), and serine 119. Glycine 79 serves as a coordination point for anthranilate. Serine 91 is a Mg(2+) binding site. An anthranilate-binding site is contributed by asparagine 110. Anthranilate is bound at residue arginine 165. Residues aspartate 224 and glutamate 225 each coordinate Mg(2+).

The protein belongs to the anthranilate phosphoribosyltransferase family. Homodimer. It depends on Mg(2+) as a cofactor.

The catalysed reaction is N-(5-phospho-beta-D-ribosyl)anthranilate + diphosphate = 5-phospho-alpha-D-ribose 1-diphosphate + anthranilate. It participates in amino-acid biosynthesis; L-tryptophan biosynthesis; L-tryptophan from chorismate: step 2/5. Functionally, catalyzes the transfer of the phosphoribosyl group of 5-phosphorylribose-1-pyrophosphate (PRPP) to anthranilate to yield N-(5'-phosphoribosyl)-anthranilate (PRA). The sequence is that of Anthranilate phosphoribosyltransferase from Endomicrobium trichonymphae.